The chain runs to 637 residues: Biosynthetic arginine decarboxylase (637 aa).

An N6-(pyridoxal phosphate)lysine modification is found at Lys101. Residue 286-296 (FDVGGGLAVDY) coordinates substrate.

It belongs to the Orn/Lys/Arg decarboxylase class-II family. SpeA subfamily. The cofactor is Mg(2+). It depends on pyridoxal 5'-phosphate as a cofactor.

The enzyme catalyses L-arginine + H(+) = agmatine + CO2. It functions in the pathway amine and polyamine biosynthesis; agmatine biosynthesis; agmatine from L-arginine: step 1/1. Catalyzes the biosynthesis of agmatine from arginine. The sequence is that of Biosynthetic arginine decarboxylase from Shewanella baltica (strain OS195).